Consider the following 498-residue polypeptide: uncharacterized protein (498 aa).

This is an uncharacterized protein from Acanthamoeba polyphaga (Amoeba).